Reading from the N-terminus, the 149-residue chain is 3-dehydroquinate dehydratase (149 aa).

The Proton acceptor role is filled by tyrosine 24. The substrate site is built by asparagine 75, histidine 81, and aspartate 88. Catalysis depends on histidine 101, which acts as the Proton donor. Substrate-binding positions include 102-103 and arginine 112; that span reads LS.

This sequence belongs to the type-II 3-dehydroquinase family. In terms of assembly, homododecamer.

The catalysed reaction is 3-dehydroquinate = 3-dehydroshikimate + H2O. The protein operates within metabolic intermediate biosynthesis; chorismate biosynthesis; chorismate from D-erythrose 4-phosphate and phosphoenolpyruvate: step 3/7. Its function is as follows. Catalyzes a trans-dehydration via an enolate intermediate. The sequence is that of 3-dehydroquinate dehydratase from Bartonella tribocorum (strain CIP 105476 / IBS 506).